A 133-amino-acid polypeptide reads, in one-letter code: Protein U17 (133 aa).

Residues Phe82–Leu102 form a helical membrane-spanning segment.

It is found in the membrane. The polypeptide is Protein U17 (U17/U16) (Homo sapiens (Human)).